The primary structure comprises 196 residues: Putative NADH dehydrogenase/NAD(P)H nitroreductase Pnuc_0932 (196 aa).

This sequence belongs to the nitroreductase family. HadB/RutE subfamily. It depends on FMN as a cofactor.

The protein is Putative NADH dehydrogenase/NAD(P)H nitroreductase Pnuc_0932 of Polynucleobacter asymbioticus (strain DSM 18221 / CIP 109841 / QLW-P1DMWA-1) (Polynucleobacter necessarius subsp. asymbioticus).